Consider the following 710-residue polypeptide: Adenylosuccinate synthetase (710 aa).

2 disordered regions span residues 1–51 (MPVR…PVPQ) and 84–111 (DEPPHGSQKSLSVAPYTANASSSSGRSK). Composition is skewed to polar residues over residues 10-27 (YNNSSPGVSNALSPSTTA) and 101-111 (ANASSSSGRSK). Residues 180–186 (GDEGKGK) and 210–212 (GHT) each bind GTP. Asp181 serves as the catalytic Proton acceptor. Positions 181 and 210 each coordinate Mg(2+). IMP-binding positions include 181-184 (DEGK), 208-211 (NAGH), Thr295, Lys309, Gln421, Thr437, and Lys567. The active-site Proton donor is His211. Position 563-569 (563-569 (AVTKKPR)) interacts with substrate. GTP is bound by residues Arg569 and 697-699 (GNG).

This sequence belongs to the adenylosuccinate synthetase family. Homodimer. It depends on Mg(2+) as a cofactor.

It is found in the cytoplasm. The catalysed reaction is IMP + L-aspartate + GTP = N(6)-(1,2-dicarboxyethyl)-AMP + GDP + phosphate + 2 H(+). The protein operates within purine metabolism; AMP biosynthesis via de novo pathway; AMP from IMP: step 1/2. Plays an important role in the salvage pathway for purine nucleotide biosynthesis. Catalyzes the first committed step in the biosynthesis of AMP from IMP. The polypeptide is Adenylosuccinate synthetase (Leishmania infantum).